The following is a 122-amino-acid chain: Large ribosomal subunit protein bL12 (122 aa).

This sequence belongs to the bacterial ribosomal protein bL12 family. In terms of assembly, homodimer. Part of the ribosomal stalk of the 50S ribosomal subunit. Forms a multimeric L10(L12)X complex, where L10 forms an elongated spine to which 2 to 4 L12 dimers bind in a sequential fashion. Binds GTP-bound translation factors.

In terms of biological role, forms part of the ribosomal stalk which helps the ribosome interact with GTP-bound translation factors. Is thus essential for accurate translation. The protein is Large ribosomal subunit protein bL12 of Clostridium botulinum (strain Langeland / NCTC 10281 / Type F).